The chain runs to 297 residues: Mitochondrial substrate carrier family protein P (297 aa).

3 Solcar repeats span residues 12 to 98 (KPSW…IKNH), 104 to 189 (SSSF…LKRI), and 201 to 293 (ISGT…LSNF). Transmembrane regions (helical) follow at residues 15–35 (WVSFLSGGLAGVTAKSAVAPL), 66–86 (GIKGLWRGNSATILRVFPYAA), 107–127 (FQIFLAGSAAGGIAVCATYPL), 165–185 (IQPTLIGILPYGGISFSTFEF), 207–227 (LIAGGIAGGVAQTVAYPFDVV), and 262–282 (ILALYKGLSINYVKVIPTASI).

The protein belongs to the mitochondrial carrier (TC 2.A.29) family.

It is found in the mitochondrion inner membrane. Functionally, mitochondrial solute carriers shuttle metabolites, nucleotides, and cofactors through the mitochondrial inner membrane. Required for the accumulation of coenzyme A in the mitochondrial matrix. The chain is Mitochondrial substrate carrier family protein P (mcfP) from Dictyostelium discoideum (Social amoeba).